Reading from the N-terminus, the 436-residue chain is GTPase Der (436 aa).

EngA-type G domains lie at 4–167 and 176–351; these read PVIA…PKIE and IRFS…ESHS. Residues 10–17, 57–61, 119–122, 182–189, 229–233, and 294–297 contribute to the GTP site; these read GRPNVGKS, DTGGI, NKVD, DTAGM, and NKWD. Residues 352–436 form the KH-like domain; sequence IRVQTNVLND…PIHIIARARD (85 aa).

The protein belongs to the TRAFAC class TrmE-Era-EngA-EngB-Septin-like GTPase superfamily. EngA (Der) GTPase family. Associates with the 50S ribosomal subunit.

Its function is as follows. GTPase that plays an essential role in the late steps of ribosome biogenesis. This is GTPase Der from Bacillus mycoides (strain KBAB4) (Bacillus weihenstephanensis).